The following is a 111-amino-acid chain: Large ribosomal subunit protein P2 (111 aa).

Positions 81–111 (AAGGAAAPAAEEKKEEEKEESDEDMGFGLFD) are disordered. The residue at position 101 (Ser101) is a Phosphoserine.

This sequence belongs to the eukaryotic ribosomal protein P1/P2 family. As to quaternary structure, P1 and P2 exist as dimers at the large ribosomal subunit.

Plays an important role in the elongation step of protein synthesis. This is Large ribosomal subunit protein P2 from Aspergillus fumigatus (strain ATCC MYA-4609 / CBS 101355 / FGSC A1100 / Af293) (Neosartorya fumigata).